Consider the following 97-residue polypeptide: Large ribosomal subunit protein bL27 (97 aa).

Positions 1 to 12 (MLKMNLANLQLF) are excised as a propeptide. The interval 14-37 (HKKGGGSTSNGRDSQAKRLGAKAA) is disordered.

This sequence belongs to the bacterial ribosomal protein bL27 family. Post-translationally, the N-terminus is cleaved by ribosomal processing cysteine protease Prp.

This Streptococcus agalactiae serotype III (strain NEM316) protein is Large ribosomal subunit protein bL27.